Reading from the N-terminus, the 451-residue chain is Serine--tRNA ligase, cytoplasmic (451 aa).

C213 and C244 are disulfide-bonded. L-serine is bound at residue 238 to 240 (TAE). ATP-binding positions include 269–271 (RKE) and V285. E292 serves as a coordination point for L-serine. 358-361 (ELVS) lines the ATP pocket. Position 396 (T396) interacts with L-serine.

This sequence belongs to the class-II aminoacyl-tRNA synthetase family. Type-1 seryl-tRNA synthetase subfamily. As to quaternary structure, homodimer. The tRNA molecule binds across the dimer.

Its subcellular location is the cytoplasm. It localises to the cytosol. The enzyme catalyses tRNA(Ser) + L-serine + ATP = L-seryl-tRNA(Ser) + AMP + diphosphate + H(+). Catalyzes the attachment of serine to tRNA(Ser) in a two-step reaction: serine is first activated by ATP to form Ser-AMP and then transferred to the acceptor end of tRNA(Ser). This Arabidopsis thaliana (Mouse-ear cress) protein is Serine--tRNA ligase, cytoplasmic.